The primary structure comprises 225 residues: Futalosine hydrolase (225 aa).

It belongs to the PNP/UDP phosphorylase family. Futalosine hydrolase subfamily. In terms of assembly, homotetramer.

The enzyme catalyses futalosine + H2O = dehypoxanthine futalosine + hypoxanthine. It functions in the pathway quinol/quinone metabolism; menaquinone biosynthesis. Its activity is regulated as follows. No enhancing of inhibitory effects are observed with divalent metal ions. Slightly inhibited by hypoxanthine. In terms of biological role, catalyzes the hydrolysis of futalosine (FL) to dehypoxanthine futalosine (DHFL) and hypoxanthine, a step in the biosynthesis of menaquinone (MK, vitamin K2). Is highly specific to futalosine since it does not accept aminodeoxyfutalosine (AFL), or any structurally related nucleotides and nucleosides as substrate. This chain is Futalosine hydrolase, found in Thermus thermophilus (strain ATCC 27634 / DSM 579 / HB8).